We begin with the raw amino-acid sequence, 41 residues long: Large ribosomal subunit protein bL36 (41 aa).

This sequence belongs to the bacterial ribosomal protein bL36 family.

The polypeptide is Large ribosomal subunit protein bL36 (Maricaulis maris (strain MCS10) (Caulobacter maris)).